The primary structure comprises 479 residues: U3 snoRNP-associated protein-like EMB2271 (479 aa).

The disordered stretch occupies residues M1–K73. Basic residues predominate over residues G8–K17. The span at S18–Y38 shows a compositional bias: basic and acidic residues. A compositionally biased stretch (acidic residues) spans D39 to E51. The segment covering E52–K73 has biased composition (basic and acidic residues). 7 WD repeats span residues K143–Y182, R204–A243, G246–S285, G288–Y326, A328–I366, P386–Q425, and P431–V471.

This sequence belongs to the WD repeat RRP9 family.

The protein localises to the nucleus. Its subcellular location is the nucleolus. Component of a nucleolar small nuclear ribonucleoprotein particle (snoRNP) thought to participate in the processing and modification of pre-ribosomal RNA. Essential for embryogenesis. May function during late embryogenesis. The chain is U3 snoRNP-associated protein-like EMB2271 from Arabidopsis thaliana (Mouse-ear cress).